The sequence spans 446 residues: Deoxyguanosinetriphosphate triphosphohydrolase-like protein (446 aa).

A disordered region spans residues 1 to 28; the sequence is MSSSVWQERRHGEDKQRRNDHRSPFQRD. Residues 7–28 are compositionally biased toward basic and acidic residues; the sequence is QERRHGEDKQRRNDHRSPFQRD. Residues 59-252 enclose the HD domain; sequence RLTHSLEVSQ…MELADDIAYA (194 aa).

The protein belongs to the dGTPase family. Type 2 subfamily.

In Shewanella sp. (strain MR-4), this protein is Deoxyguanosinetriphosphate triphosphohydrolase-like protein.